The chain runs to 491 residues: Protein nucleotidyltransferase YdiU (491 aa).

The ATP site is built by glycine 94, glycine 96, arginine 97, lysine 117, aspartate 129, glycine 130, arginine 180, and arginine 187. Aspartate 256 (proton acceptor) is an active-site residue. Mg(2+)-binding residues include asparagine 257 and aspartate 266. Residue aspartate 266 participates in ATP binding.

The protein belongs to the SELO family. The cofactor is Mg(2+). Mn(2+) is required as a cofactor.

It carries out the reaction L-seryl-[protein] + ATP = 3-O-(5'-adenylyl)-L-seryl-[protein] + diphosphate. The catalysed reaction is L-threonyl-[protein] + ATP = 3-O-(5'-adenylyl)-L-threonyl-[protein] + diphosphate. The enzyme catalyses L-tyrosyl-[protein] + ATP = O-(5'-adenylyl)-L-tyrosyl-[protein] + diphosphate. It catalyses the reaction L-histidyl-[protein] + UTP = N(tele)-(5'-uridylyl)-L-histidyl-[protein] + diphosphate. It carries out the reaction L-seryl-[protein] + UTP = O-(5'-uridylyl)-L-seryl-[protein] + diphosphate. The catalysed reaction is L-tyrosyl-[protein] + UTP = O-(5'-uridylyl)-L-tyrosyl-[protein] + diphosphate. In terms of biological role, nucleotidyltransferase involved in the post-translational modification of proteins. It can catalyze the addition of adenosine monophosphate (AMP) or uridine monophosphate (UMP) to a protein, resulting in modifications known as AMPylation and UMPylation. The polypeptide is Protein nucleotidyltransferase YdiU (Clostridium botulinum (strain Okra / Type B1)).